The primary structure comprises 705 residues: DNA ligase (705 aa).

NAD(+) contacts are provided by residues 42-46, 91-92, and Glu125; these read DADFD and SL. The N6-AMP-lysine intermediate role is filled by Lys127. NAD(+) contacts are provided by Arg148, Glu183, Lys299, and Lys323. Zn(2+) is bound by residues Cys428, Cys431, Cys446, and Cys452. The 80-residue stretch at 626-705 folds into the BRCT domain; it reads TDGSPVAGKT…DGWLALIEGL (80 aa).

The protein belongs to the NAD-dependent DNA ligase family. LigA subfamily. Mg(2+) serves as cofactor. Requires Mn(2+) as cofactor.

The catalysed reaction is NAD(+) + (deoxyribonucleotide)n-3'-hydroxyl + 5'-phospho-(deoxyribonucleotide)m = (deoxyribonucleotide)n+m + AMP + beta-nicotinamide D-nucleotide.. DNA ligase that catalyzes the formation of phosphodiester linkages between 5'-phosphoryl and 3'-hydroxyl groups in double-stranded DNA using NAD as a coenzyme and as the energy source for the reaction. It is essential for DNA replication and repair of damaged DNA. The chain is DNA ligase from Roseobacter denitrificans (strain ATCC 33942 / OCh 114) (Erythrobacter sp. (strain OCh 114)).